The sequence spans 226 residues: UPF0319 protein YpAngola_A3206 (226 aa).

Residues 1–20 (MKLGLVAGMLAVCFSFSSVA) form the signal peptide.

The protein belongs to the UPF0319 family.

This is UPF0319 protein YpAngola_A3206 from Yersinia pestis bv. Antiqua (strain Angola).